A 577-amino-acid chain; its full sequence is Efflux pump notK' (577 aa).

N-linked (GlcNAc...) asparagine glycosylation is found at Asn62 and Asn84. 5 consecutive transmembrane segments (helical) span residues 104–124 (AAIASVASFFLGLLANLPVAL), 151–171 (LAVTAVFVEGWIFLGLTMLGI), 189–209 (AGIGLYLTLIGLSYSAGLGLV), 241–261 (NPTMWIGIFCGGFFTVFLMMY), and 265–285 (GAVIAGILLVSIISWPRTTPV). Asn320 carries N-linked (GlcNAc...) asparagine glycosylation. The next 5 helical transmembrane spans lie at 328–348 (FGLALITFLYVDILDATGTLY), 373–393 (VDAICISIGSLFGSPPVTAFV), 413–433 (GICFFIAVFFAPIFASIPPWA), 434–454 (TGSTLVIVGSMMMHATLEINW), and 476–496 (IADGLIAGIISYILINGGVWV). The segment covering 555 to 566 (MPPNGSMSSGSP) has biased composition (low complexity). The interval 555-577 (MPPNGSMSSGSPEQVAEKAVGKY) is disordered. N-linked (GlcNAc...) asparagine glycosylation is present at Asn558.

The protein belongs to the nucleobase:cation symporter-2 (NCS2) (TC 2.A.40) family. Azg-like subfamily.

It is found in the cell membrane. Its function is as follows. Efflux pump; part of the gene cluster that mediates the biosynthesis of notoamide, a fungal indole alkaloid that belongs to a family of natural products containing a characteristic bicyclo[2.2.2]diazaoctane core. This Aspergillus versicolor protein is Efflux pump notK'.